The primary structure comprises 361 residues: 3-dehydroquinate synthase (361 aa).

Residues 72–77, 130–131, Lys-142, and Lys-151 each bind NAD(+); these read SGEKEK and TT. Residues Glu-184, His-247, and His-264 each coordinate Zn(2+).

This sequence belongs to the sugar phosphate cyclases superfamily. Dehydroquinate synthase family. Co(2+) is required as a cofactor. Zn(2+) serves as cofactor. The cofactor is NAD(+).

The protein resides in the cytoplasm. The catalysed reaction is 7-phospho-2-dehydro-3-deoxy-D-arabino-heptonate = 3-dehydroquinate + phosphate. It participates in metabolic intermediate biosynthesis; chorismate biosynthesis; chorismate from D-erythrose 4-phosphate and phosphoenolpyruvate: step 2/7. Its function is as follows. Catalyzes the conversion of 3-deoxy-D-arabino-heptulosonate 7-phosphate (DAHP) to dehydroquinate (DHQ). The polypeptide is 3-dehydroquinate synthase (Bacillus mycoides (strain KBAB4) (Bacillus weihenstephanensis)).